We begin with the raw amino-acid sequence, 254 residues long: Coproheme decarboxylase (254 aa).

Residues Arg-136, 150 to 154 (YPMDK), His-177, Gln-190, and Ser-228 contribute to the Fe-coproporphyrin III site. Tyr-150 is a catalytic residue.

The protein belongs to the ChdC family. Type 1 subfamily. It depends on Fe-coproporphyrin III as a cofactor.

The catalysed reaction is Fe-coproporphyrin III + 2 H2O2 + 2 H(+) = heme b + 2 CO2 + 4 H2O. The enzyme catalyses Fe-coproporphyrin III + H2O2 + H(+) = harderoheme III + CO2 + 2 H2O. It catalyses the reaction harderoheme III + H2O2 + H(+) = heme b + CO2 + 2 H2O. It participates in porphyrin-containing compound metabolism; protoheme biosynthesis. Functionally, involved in coproporphyrin-dependent heme b biosynthesis. Catalyzes the decarboxylation of Fe-coproporphyrin III (coproheme) to heme b (protoheme IX), the last step of the pathway. The reaction occurs in a stepwise manner with a three-propionate harderoheme intermediate. This is Coproheme decarboxylase from Bacillus subtilis (strain 168).